The following is a 96-amino-acid chain: U-reduvitoxin-Pr12a (96 aa).

Positions 1-20 (MKTALLLFFALVFIAFETEA) are cleaved as a signal peptide. 3 disulfides stabilise this stretch: Cys-21/Cys-38, Cys-33/Cys-53, and Cys-36/Cys-47. Pacifastin domains lie at 21 to 55 (CRPGALTVAPDGCNMCTCLSNGKLGRCTHDLICPP) and 59 to 94 (KLECEPGKPFKNDCNDCICSEDGLTAKCTRKLCIHK). The tract at residues 54–56 (PPR) is pro-Pro-Arg motif necessary for proteolytic processing. 3 disulfides stabilise this stretch: Cys-62–Cys-77, Cys-72–Cys-91, and Cys-75–Cys-86.

The protein belongs to the protease inhibitor I19 family. As to expression, expressed by the venom gland.

It is found in the secreted. In terms of biological role, inhibits trypsin activity and prophenoloxidase (PPO) activation, an enzyme essential for both clotting and insect innate immune responses. It does not inhibit activity of chymotrypsin and protease K, and has no effect on phenoloxidase (PO) activity. This Platymeris rhadamanthus (Red spot assassin bug) protein is U-reduvitoxin-Pr12a.